Here is a 691-residue protein sequence, read N- to C-terminus: Protein simr-1 (691 aa).

Residues glutamate 139–isoleucine 204 enclose the Tudor; degenerate domain. 2 disordered regions span residues threonine 547–isoleucine 573 and aspartate 588–serine 618. Composition is skewed to polar residues over residues proline 549–isoleucine 573 and aspartate 588–asparagine 598.

It localises to the cytoplasm. The protein localises to the perinuclear region. In terms of biological role, acts downstream of piRNA production to promote mediator complex-dependent endogenous siRNA biogenesis from piRNA-target mRNAs in the RNA interference pathway in germ cells. Not required to identify target mRNA by the piRNA pathway. Plays a role in both spermatogenesis and oogenesis and in maintaining fertility over multiple generations, probably by directing mutator-dependent silencing to piRNA-targeted genes. This is Protein simr-1 from Caenorhabditis elegans.